Here is an 890-residue protein sequence, read N- to C-terminus: Translation initiation factor IF-2 (890 aa).

Positions Leu50–Ala304 are disordered. 3 stretches are compositionally biased toward basic and acidic residues: residues Lys112–Glu125, Arg136–Glu147, and Ala217–Lys262. In terms of domain architecture, tr-type G spans Gly390–Lys559. Residues Gly399–Thr406 form a G1 region. Position 399 to 406 (Gly399 to Thr406) interacts with GTP. Residues Gly424–His428 are G2. Residues Asp445 to Gly448 are G3. GTP-binding positions include Asp445–His449 and Asn499–Asp502. The tract at residues Asn499–Asp502 is G4. The interval Ser535 to Met537 is G5.

Belongs to the TRAFAC class translation factor GTPase superfamily. Classic translation factor GTPase family. IF-2 subfamily.

It localises to the cytoplasm. Functionally, one of the essential components for the initiation of protein synthesis. Protects formylmethionyl-tRNA from spontaneous hydrolysis and promotes its binding to the 30S ribosomal subunits. Also involved in the hydrolysis of GTP during the formation of the 70S ribosomal complex. This chain is Translation initiation factor IF-2, found in Halorhodospira halophila (strain DSM 244 / SL1) (Ectothiorhodospira halophila (strain DSM 244 / SL1)).